Consider the following 396-residue polypeptide: 1-deoxy-D-xylulose 5-phosphate reductoisomerase (396 aa).

8 residues coordinate NADPH: Thr10, Gly11, Ser12, Ile13, Gly36, Lys37, Asn38, and Asn124. Lys125 is a 1-deoxy-D-xylulose 5-phosphate binding site. Glu126 serves as a coordination point for NADPH. A Mn(2+)-binding site is contributed by Asp150. 1-deoxy-D-xylulose 5-phosphate contacts are provided by Ser151, Glu152, Ser186, and His209. Glu152 is a binding site for Mn(2+). Gly215 is an NADPH binding site. Residues Ser222, Asn227, Lys228, and Glu231 each contribute to the 1-deoxy-D-xylulose 5-phosphate site. Position 231 (Glu231) interacts with Mn(2+).

This sequence belongs to the DXR family. The cofactor is Mg(2+). It depends on Mn(2+) as a cofactor.

It catalyses the reaction 2-C-methyl-D-erythritol 4-phosphate + NADP(+) = 1-deoxy-D-xylulose 5-phosphate + NADPH + H(+). The protein operates within isoprenoid biosynthesis; isopentenyl diphosphate biosynthesis via DXP pathway; isopentenyl diphosphate from 1-deoxy-D-xylulose 5-phosphate: step 1/6. Catalyzes the NADPH-dependent rearrangement and reduction of 1-deoxy-D-xylulose-5-phosphate (DXP) to 2-C-methyl-D-erythritol 4-phosphate (MEP). In Actinobacillus pleuropneumoniae serotype 3 (strain JL03), this protein is 1-deoxy-D-xylulose 5-phosphate reductoisomerase.